The chain runs to 336 residues: Fructose-1,6-bisphosphatase class 1 (336 aa).

Residues Glu92, Asp115, Leu117, and Asp118 each contribute to the Mg(2+) site. Substrate is bound by residues 118 to 121, Asn211, Tyr244, 262 to 264, and Lys274; these read DGSS and YLY. Residue Glu280 coordinates Mg(2+).

Belongs to the FBPase class 1 family. As to quaternary structure, homotetramer. Mg(2+) serves as cofactor.

Its subcellular location is the cytoplasm. The enzyme catalyses beta-D-fructose 1,6-bisphosphate + H2O = beta-D-fructose 6-phosphate + phosphate. The protein operates within carbohydrate biosynthesis; gluconeogenesis. The chain is Fructose-1,6-bisphosphatase class 1 from Hahella chejuensis (strain KCTC 2396).